Here is a 147-residue protein sequence, read N- to C-terminus: Large-conductance mechanosensitive channel (147 aa).

2 helical membrane passes run 14–34 and 85–105; these read VVDM…VKSL and FGLF…LFMI.

The protein belongs to the MscL family. As to quaternary structure, homopentamer.

It is found in the cell inner membrane. In terms of biological role, channel that opens in response to stretch forces in the membrane lipid bilayer. May participate in the regulation of osmotic pressure changes within the cell. The polypeptide is Large-conductance mechanosensitive channel (Tolumonas auensis (strain DSM 9187 / NBRC 110442 / TA 4)).